A 190-amino-acid polypeptide reads, in one-letter code: Protein GrpE (190 aa).

Disordered regions lie at residues 1–22 (MAEE…GQTI) and 170–190 (EEGE…KPQS). The span at 181 to 190 (ARVKVGKPQS) shows a compositional bias: basic residues.

This sequence belongs to the GrpE family. In terms of assembly, homodimer.

It localises to the cytoplasm. In terms of biological role, participates actively in the response to hyperosmotic and heat shock by preventing the aggregation of stress-denatured proteins, in association with DnaK and GrpE. It is the nucleotide exchange factor for DnaK and may function as a thermosensor. Unfolded proteins bind initially to DnaJ; upon interaction with the DnaJ-bound protein, DnaK hydrolyzes its bound ATP, resulting in the formation of a stable complex. GrpE releases ADP from DnaK; ATP binding to DnaK triggers the release of the substrate protein, thus completing the reaction cycle. Several rounds of ATP-dependent interactions between DnaJ, DnaK and GrpE are required for fully efficient folding. This chain is Protein GrpE, found in Leptospira biflexa serovar Patoc (strain Patoc 1 / Ames).